Consider the following 37-residue polypeptide: Bactericidin B-2 (37 aa).

Residue G37 is modified to Glycine amide.

The protein belongs to the cecropin family.

It localises to the secreted. Functionally, cecropins have lytic and antibacterial activity against several Gram-positive and Gram-negative bacteria. This Manduca sexta (Tobacco hawkmoth) protein is Bactericidin B-2.